Here is a 494-residue protein sequence, read N- to C-terminus: Protein DETOXIFICATION 22 (494 aa).

12 helical membrane-spanning segments follow: residues 40 to 60, 78 to 98, 123 to 143, 159 to 179, 188 to 208, 217 to 237, 268 to 288, 299 to 319, 340 to 360, 384 to 404, 416 to 436, and 441 to 461; these read LWVVAAPSIFTKFSTYGVSLV, ITFTVLLRFSNGILLGMASAL, IVLTGCTICIMPIFIFSGPIL, IALWLIAINFTFVPAFTCQIF, IIAYVSAVTLGLHVFFSWLLV, GAMTSTLVAFWMPNIVQLLYV, GGMVCLELWYNSILVLLTGNL, AICINVNALQMMIALGFLAAV, IVAVFTSLSIGLVLFFVFLFL, LLAFSILLNSVQPVLSGVAVG, LACYYLLGIPVGLVLGYVVGL, and VWIGMLFGIFVQTCVLTIMTL.

It belongs to the multi antimicrobial extrusion (MATE) (TC 2.A.66.1) family.

It is found in the membrane. The polypeptide is Protein DETOXIFICATION 22 (Arabidopsis thaliana (Mouse-ear cress)).